A 513-amino-acid polypeptide reads, in one-letter code: Protein disulfide-isomerase 2 (513 aa).

The N-terminal stretch at 1–20 is a signal peptide; the sequence is MNKFLALLFVLALFANIAFS. Thioredoxin domains lie at 21-147 and 355-486; these read CEGH…EELK and DVIG…DNAA. Residues cysteine 70, cysteine 73, cysteine 406, and cysteine 409 each act as nucleophile in the active site. Cystine bridges form between cysteine 70/cysteine 73 and cysteine 406/cysteine 409. The disordered stretch occupies residues 491–513; that stretch reads LPSSQTDDNVESKKDSSAKHDEL. The segment covering 500–513 has biased composition (basic and acidic residues); sequence VESKKDSSAKHDEL. A Prevents secretion from ER motif is present at residues 510-513; the sequence is HDEL.

The protein belongs to the protein disulfide isomerase family.

Its subcellular location is the endoplasmic reticulum lumen. The catalysed reaction is Catalyzes the rearrangement of -S-S- bonds in proteins.. Functionally, participates in the folding of proteins containing disulfide bonds, may be involved in glycosylation, prolyl hydroxylation and triglyceride transfer. The protein is Protein disulfide-isomerase 2 (pdi2) of Dictyostelium discoideum (Social amoeba).